The sequence spans 637 residues: MAGGAGWSGAPAALLRSVRRLREVFEVCGRDPDGFLRVERVAALGLRFGQGEEVEKLVKYLDPNDLGRINFKDFCRGVFAMKGCEELLKDVLSVESAGTLPCAPEIPDCVEQGSEVTGPTFADGELIPREPGFFPEDEEEAMTLAPPEGPQELYTDSPMESTQSLEGSVGSPAEKDGGLGGLFLPEDKSLVHTPSMTTSDLSTHSTTSLISNEEQFEDYGEGDDVDCAPSSPCPDDETRTNVYSDLGSSVSSSAGQTPRKMRHVYNSELLDVYCSQCCKKINLLNDLEARLKNLKANSPNRKISSTAFGRQLMHSSNFSSSNGSTEDLFRDSIDSCDNDITEKVSFLEKKVTELENDSLTNGDLKSKLKQENTQLVHRVHELEEMVKDQETTAEQALEEEARRHREAYGKLEREKATEVELLNARVQQLEEENTELRTTVTRLKSQTEKLDEERQRMSDRLEDTSLRLKDEMDLYKRMMDKLRQNRLEFQKEREATQELIEDLRKELEHLQMYKLDCERPGRGRSASSGLGEFNARAREVELEHEVKRLKQENYKLRDQNDDLNGQILSLSLYEAKNLFAAQTKAQSLAAEIDTASRDELMEALKEQEEINFRLRQYMDKIILAILDHNPSILEIKH.

In terms of domain architecture, EF-hand spans 49–84 (GQGEEVEKLVKYLDPNDLGRINFKDFCRGVFAMKGC). Ca(2+)-binding residues include aspartate 62, asparagine 64, arginine 68, and aspartate 73. Residues 82–637 (KGCEELLKDV…HNPSILEIKH (556 aa)) are necessary for interaction with RAB11A, subcellular location, homo- or heterooligomerization. 2 disordered regions span residues 138–175 (EEEAMTLAPPEGPQELYTDSPMESTQSLEGSVGSPAEK) and 219–256 (YGEGDDVDCAPSSPCPDDETRTNVYSDLGSSVSSSAGQ). Residues 280–617 (KINLLNDLEA…EEINFRLRQY (338 aa)) adopt a coiled-coil conformation. Residues 574 to 636 (EAKNLFAAQT…DHNPSILEIK (63 aa)) enclose the FIP-RBD domain.

As to quaternary structure, homodimer. Forms a complex with Rab11 (RAB11A or RAB11B) and ARF6. Interacts with RAB11A; the interaction is direct. Forms a heterooligomeric complex with RAB11FIP2, RAB11FIP3 and RAB11FIP5. Interacts with ECPAS. In terms of assembly, (Microbial infection) Interacts with human cytomegalovirus/HHV-5 protein gM/UL100. In terms of tissue distribution, present at high level in testis (at protein level). Weakly expressed in other tissues.

It is found in the endosome. Its subcellular location is the cytoplasm. The protein localises to the cytoskeleton. It localises to the spindle. The protein resides in the microtubule organizing center. It is found in the centrosome. Its subcellular location is the recycling endosome membrane. The protein localises to the cleavage furrow. It localises to the midbody. The protein resides in the cytoplasmic vesicle. Functionally, acts as a regulator of endocytic traffic by participating in membrane delivery. Required for the abscission step in cytokinesis, possibly by acting as an 'address tag' delivering recycling endosome membranes to the cleavage furrow during late cytokinesis. In case of infection by HCMV (human cytomegalovirus), may participate in egress of the virus out of nucleus; this function is independent of ARF6. This is Rab11 family-interacting protein 4 (RAB11FIP4) from Homo sapiens (Human).